The sequence spans 244 residues: Flagellar L-ring protein (244 aa).

Residues 1–18 form the signal peptide; sequence MNMRVFIFLIFAAASVSA. Cys19 carries the N-palmitoyl cysteine lipid modification. Cys19 is lipidated: S-diacylglycerol cysteine.

This sequence belongs to the FlgH family. The basal body constitutes a major portion of the flagellar organelle and consists of four rings (L,P,S, and M) mounted on a central rod.

The protein resides in the cell outer membrane. It localises to the bacterial flagellum basal body. In terms of biological role, assembles around the rod to form the L-ring and probably protects the motor/basal body from shearing forces during rotation. This chain is Flagellar L-ring protein, found in Jannaschia sp. (strain CCS1).